The following is a 425-amino-acid chain: Glutamate-1-semialdehyde 2,1-aminomutase (425 aa).

Position 265 is an N6-(pyridoxal phosphate)lysine (Lys265).

Belongs to the class-III pyridoxal-phosphate-dependent aminotransferase family. HemL subfamily. In terms of assembly, homodimer. Pyridoxal 5'-phosphate is required as a cofactor.

It is found in the cytoplasm. The enzyme catalyses (S)-4-amino-5-oxopentanoate = 5-aminolevulinate. The protein operates within porphyrin-containing compound metabolism; protoporphyrin-IX biosynthesis; 5-aminolevulinate from L-glutamyl-tRNA(Glu): step 2/2. This chain is Glutamate-1-semialdehyde 2,1-aminomutase, found in Clostridium perfringens (strain SM101 / Type A).